The following is a 273-amino-acid chain: Programmed cell death 1 ligand 2 (273 aa).

Residues 1 to 19 (MIFLLLMLSLELQLHQIAA) form the signal peptide. Topologically, residues 20–220 (LFTVTVPKEL…SQMEPRTHPT (201 aa)) are extracellular. Residues 21–118 (FTVTVPKELY…AWDYKYLTLK (98 aa)) enclose the Ig-like V-type domain. N-linked (GlcNAc...) asparagine glycans are attached at residues N37, N64, N157, N163, and N189. 2 disulfides stabilise this stretch: C42–C102 and C143–C192. Residues 122–203 (SYRKINTHIL…FWNTHVRELT (82 aa)) form the Ig-like C2-type domain. A helical transmembrane segment spans residues 221 to 241 (WLLHIFIPFCIIAFIFIATVI). The Cytoplasmic segment spans residues 242–273 (ALRKQLCQKLYSSKDTTKRPVTTTKREVNSAI).

It belongs to the immunoglobulin superfamily. BTN/MOG family. Interacts with PDCD1. Highly expressed in heart, placenta, pancreas, lung and liver and weakly expressed in spleen, lymph nodes and thymus.

It is found in the secreted. The protein localises to the endomembrane system. Its subcellular location is the cell membrane. In terms of biological role, involved in the costimulatory signal, essential for T-cell proliferation and IFNG production in a PDCD1-independent manner. Interaction with PDCD1 inhibits T-cell proliferation by blocking cell cycle progression and cytokine production. This Homo sapiens (Human) protein is Programmed cell death 1 ligand 2 (PDCD1LG2).